A 127-amino-acid chain; its full sequence is Small ribosomal subunit protein uS12 (127 aa).

Asp89 is subject to 3-methylthioaspartic acid.

Belongs to the universal ribosomal protein uS12 family. Part of the 30S ribosomal subunit. Contacts proteins S8 and S17. May interact with IF1 in the 30S initiation complex.

In terms of biological role, with S4 and S5 plays an important role in translational accuracy. Its function is as follows. Interacts with and stabilizes bases of the 16S rRNA that are involved in tRNA selection in the A site and with the mRNA backbone. Located at the interface of the 30S and 50S subunits, it traverses the body of the 30S subunit contacting proteins on the other side and probably holding the rRNA structure together. The combined cluster of proteins S8, S12 and S17 appears to hold together the shoulder and platform of the 30S subunit. The protein is Small ribosomal subunit protein uS12 of Akkermansia muciniphila (strain ATCC BAA-835 / DSM 22959 / JCM 33894 / BCRC 81048 / CCUG 64013 / CIP 107961 / Muc).